The following is a 467-amino-acid chain: ADAM DEC1 (467 aa).

The first 33 residues, 1 to 33 (MLPGTSRLPTEASMSWVLLSVLWLIIQIQVIDA), serve as a signal peptide directing secretion. The propeptide occupies 34 to 208 (TLTPELKPHE…LRTSRSLKNP (175 aa)). Asparagine 61 and asparagine 236 each carry an N-linked (GlcNAc...) asparagine glycan. Positions 217–411 (KYIGLFLVLD…RNARCLLLAP (195 aa)) constitute a Peptidase M12B domain. Cystine bridges form between cysteine 327/cysteine 406 and cysteine 368/cysteine 373. Histidine 351 serves as a coordination point for Zn(2+). Glutamate 352 is an active-site residue. Histidine 355 and aspartate 361 together coordinate Zn(2+). The Disintegrin domain occupies 418–467 (KPTCGNQVLDVGEECDCGSPEECTNLCCEPLTCRLKSQPDCSEASNHITE).

Requires Zn(2+) as cofactor. In terms of tissue distribution, expressed highly in uterus during pregnancy.

The protein localises to the secreted. Its function is as follows. May play an important role in the control of the immune response and during pregnancy. The protein is ADAM DEC1 (Adamdec1) of Mus musculus (Mouse).